A 166-amino-acid chain; its full sequence is Large ribosomal subunit protein uL10 (166 aa).

Belongs to the universal ribosomal protein uL10 family. In terms of assembly, part of the ribosomal stalk of the 50S ribosomal subunit. The N-terminus interacts with L11 and the large rRNA to form the base of the stalk. The C-terminus forms an elongated spine to which L12 dimers bind in a sequential fashion forming a multimeric L10(L12)X complex.

In terms of biological role, forms part of the ribosomal stalk, playing a central role in the interaction of the ribosome with GTP-bound translation factors. This is Large ribosomal subunit protein uL10 from Bacillus licheniformis (strain ATCC 14580 / DSM 13 / JCM 2505 / CCUG 7422 / NBRC 12200 / NCIMB 9375 / NCTC 10341 / NRRL NRS-1264 / Gibson 46).